A 94-amino-acid chain; its full sequence is Co-chaperonin GroES (94 aa).

It belongs to the GroES chaperonin family. In terms of assembly, heptamer of 7 subunits arranged in a ring. Interacts with the chaperonin GroEL.

It localises to the cytoplasm. Functionally, together with the chaperonin GroEL, plays an essential role in assisting protein folding. The GroEL-GroES system forms a nano-cage that allows encapsulation of the non-native substrate proteins and provides a physical environment optimized to promote and accelerate protein folding. GroES binds to the apical surface of the GroEL ring, thereby capping the opening of the GroEL channel. This Enterococcus faecalis (strain ATCC 700802 / V583) protein is Co-chaperonin GroES.